The sequence spans 1140 residues: Rho GTPase-activating protein gacF (1140 aa).

8 disordered regions span residues 1 to 145 (MKTH…KPSR), 189 to 236 (ESDI…IEPI), 455 to 504 (INNN…STSF), 520 to 644 (EVQQ…GLES), 661 to 700 (ESSKLPKKSSLNRQMTIVNSNNIGNGDEKNSDCTTSDEDE), 720 to 759 (ETNDDNNNNDQINNSNSSNNIPKTTITTTTNNTTTTNNIS), 773 to 927 (AKVT…STLS), and 952 to 1095 (TSSP…NHTN). 2 stretches are compositionally biased toward low complexity: residues 10 to 26 (LGGLFSHSSSSPNLKSF) and 35 to 71 (QQQQQQQHNNNNNNNNNHQRQPSTTSTSSYIDSASSS). Residues 28 to 55 (TEEVIHEQQQQQQQHNNNNNNNNNHQRQ) adopt a coiled-coil conformation. Over residues 72–82 (IEETSGYLSKT) the composition is skewed to polar residues. 2 stretches are compositionally biased toward low complexity: residues 83 to 136 (SSSS…TSSP) and 193 to 222 (DNGSSGGTTSSTGNIISHSKSPSSSSSSSS). Residues 234–409 (EPISQSTEDY…RLIENYHSIF (176 aa)) form the Rho-GAP domain. Composition is skewed to low complexity over residues 456-475 (NNNSNSSNNNNSSSSSSPYK) and 482-493 (PKSSPKLNNRNS). Residues 494–504 (ISPKLSSSTSF) show a composition bias toward polar residues. Residues 517–548 (ISDEVQQEQQNQQQQQDEQQDEQQDEQQDEQQ) adopt a coiled-coil conformation. Positions 520 to 533 (EVQQEQQNQQQQQD) are enriched in low complexity. A compositionally biased stretch (acidic residues) spans 534-549 (EQQDEQQDEQQDEQQD). Residues 550–566 (EQNSNSTSINTSSSSIT) are compositionally biased toward low complexity. The segment covering 572–596 (STVQYLNRINTCRRPSSWTNNNRIK) has biased composition (polar residues). A compositionally biased stretch (basic residues) spans 597–606 (QQQHHHHHHQ). A compositionally biased stretch (low complexity) spans 607 to 631 (QQQQHQQHQQQQSSSSESNSSLTSS). Composition is skewed to polar residues over residues 632–641 (PQKRLNSVNG) and 672–684 (NRQMTIVNSNNIG). Residues 724-759 (DNNNNDQINNSNSSNNIPKTTITTTTNNTTTTNNIS) show a composition bias toward low complexity. The segment covering 773 to 796 (AKVTPTPTPAPMQTSSFLSTKQTN) has biased composition (polar residues). The segment covering 797–822 (SPSSSSSPSSTVSSTSSSPSSSLSSS) has biased composition (low complexity). Residues 823–854 (IDNKTMSNVNYNRFQPANRTVSSPNVRNFSVP) are compositionally biased toward polar residues. Composition is skewed to low complexity over residues 891-914 (KPKNTTSSLSSSSSNISKSTNSTP), 952-1058 (TSSP…TSST), and 1065-1079 (HSNSLSQTPSSSSSS).

The protein localises to the cytoplasm. Its function is as follows. Rho GTPase-activating protein involved in the signal transduction pathway. The chain is Rho GTPase-activating protein gacF (gacF) from Dictyostelium discoideum (Social amoeba).